Reading from the N-terminus, the 397-residue chain is uncharacterized protein (397 aa).

The next 4 helical transmembrane spans lie at 22-42 (ILTM…VAVG), 270-290 (IMTT…GIGV), 327-347 (VVLT…GAAL), and 362-382 (VVCG…MLPA).

This sequence belongs to the ABC-4 integral membrane protein family. In terms of assembly, part of a complex composed of YknX, YknY and YknZ. The complex interacts with YknW.

The protein resides in the cell membrane. The protein localises to the membrane raft. In terms of biological role, part of an unusual four-component transporter, which is required for protection against the killing factor SdpC (sporulation-delaying protein). This is an uncharacterized protein from Bacillus subtilis (strain 168).